Consider the following 138-residue polypeptide: Protein FAM136A (138 aa).

An N-acetylalanine modification is found at alanine 2. Residues threonine 124 and threonine 126 each carry the phosphothreonine modification.

Belongs to the FAM136 family.

This chain is Protein FAM136A (FAM136A), found in Homo sapiens (Human).